The following is a 349-amino-acid chain: Merozoite surface protein P38 (349 aa).

Positions 1-21 (MKRWSIITGIVIIFCILTCKG) are cleaved as a signal peptide. 2 consecutive 6-Cys domains span residues 22 to 149 (QVEN…ISNG) and 153 to 301 (KIPG…YLTN). Cystine bridges form between C77/C127, C157/C183, C197/C278, and C208/C276. 3 N-linked (GlcNAc...) asparagine glycosylation sites follow: N294, N295, and N301. A lipid anchor (GPI-anchor amidated asparagine) is attached at N315. Residues 316–349 (SEIFERIEREEISFAFSSYLSITLILLYLFFLNF) constitute a propeptide, removed in mature form.

It localises to the cell surface. It is found in the cell membrane. In Plasmodium falciparum (isolate 3D7), this protein is Merozoite surface protein P38 (PFS38).